Reading from the N-terminus, the 445-residue chain is C-terminal-binding protein 2 (445 aa).

Position 22 is an asymmetric dimethylarginine (arginine 22). NAD(+)-binding positions include serine 106, isoleucine 186–threonine 191, aspartate 210, cysteine 243–asparagine 249, alanine 270–arginine 272, and aspartate 296. The active site involves arginine 272. The active site involves glutamate 301. The active-site Proton donor is histidine 321. Histidine 321–tryptophan 324 is an NAD(+) binding site. The interval threonine 414–glutamine 445 is disordered. Serine 428 is subject to Phosphoserine; by HIPK2. Over residues lysine 434–glutamine 445 the composition is skewed to basic and acidic residues.

Belongs to the D-isomer specific 2-hydroxyacid dehydrogenase family. In terms of assembly, interacts with HIPK2 and PNN. Interacts with the transcription factors ZNF217, BKLF, delta EF1/AREB6/ZEB, EVI-1 and Friend of GATA (FOG) via the consensus motif P-X-[DNS]-L-[STVA]. Also interacts with the C-terminus of adenovirus E1A protein. Can form a complex with BKLF on a CACCC-box oligonucleotide. Can form homodimers or heterodimers of CTBP1 and CTBP2. Interacts with NRIP1 and WIZ. Interacts with PRDM16; represses white adipose tissue (WAT)-specific genes expression. Interacts with MCRIP1. Post-translationally, phosphorylation by HIPK2 on Ser-428 induces proteasomal degradation. In terms of tissue distribution, found in all tissues except spleen and liver.

It localises to the nucleus. It is found in the synapse. Its function is as follows. Corepressor targeting diverse transcription regulators. Isoform 2 probably acts as a scaffold for specialized synapses. Functions in brown adipose tissue (BAT) differentiation. This Mus musculus (Mouse) protein is C-terminal-binding protein 2 (Ctbp2).